A 170-amino-acid polypeptide reads, in one-letter code: Urease accessory protein UreE (170 aa).

The tract at residues 134-170 is disordered; the sequence is ESGAYGGGHHHHGDDGHHPLAPIPLRQKIHRPSDKAE.

It belongs to the UreE family.

The protein resides in the cytoplasm. Functionally, involved in urease metallocenter assembly. Binds nickel. Probably functions as a nickel donor during metallocenter assembly. The protein is Urease accessory protein UreE of Janthinobacterium sp. (strain Marseille) (Minibacterium massiliensis).